The following is a 136-amino-acid chain: Histone H2B.5 (136 aa).

The segment covering 1–36 (MAPKAEKKPAAEKKPVETEKKPKAEKRVPGKDGGAD) has biased composition (basic and acidic residues). Residues 1-44 (MAPKAEKKPAAEKKPVETEKKPKAEKRVPGKDGGADKKKKKAKK) are disordered. 2 positions are modified to N6-acetyllysine: K7 and K26. A Glycyl lysine isopeptide (Lys-Gly) (interchain with G-Cter in ubiquitin) cross-link involves residue K132.

It belongs to the histone H2B family. In terms of assembly, the nucleosome is a histone octamer containing two molecules each of H2A, H2B, H3 and H4 assembled in one H3-H4 heterotetramer and two H2A-H2B heterodimers. The octamer wraps approximately 147 bp of DNA. Post-translationally, can be acetylated to form H2BK6ac and H2BK33ac. Monoubiquitinated to form H2BK143ub1; may give a specific tag for epigenetic transcriptional activation.

The protein resides in the nucleus. Its subcellular location is the chromosome. Functionally, core component of nucleosome. Nucleosomes wrap and compact DNA into chromatin, limiting DNA accessibility to the cellular machineries which require DNA as a template. Histones thereby play a central role in transcription regulation, DNA repair, DNA replication and chromosomal stability. DNA accessibility is regulated via a complex set of post-translational modifications of histones, also called histone code, and nucleosome remodeling. The chain is Histone H2B.5 from Triticum aestivum (Wheat).